Consider the following 33-residue polypeptide: Maurocalcin (33 aa).

Cystine bridges form between cysteine 3–cysteine 17, cysteine 10–cysteine 21, and cysteine 16–cysteine 32. Positions 22 to 24 are essential for stimulation of [3H]ryanodine binding to RYR; it reads KRR.

This sequence belongs to the scorpion calcin family. In terms of processing, the non-natural D-maurocalcin (a chiral analog of maurocalcin composed of D-amino acids) completely loses the ability to stimulate [3H]ryanodine binding and calcium release. Its protease resistance, combined with its efficient cell penetration at concentrations devoid of cell toxicity, suggests that it should be an excellent vector for in vivo applications. In terms of tissue distribution, expressed by the venom gland.

The protein resides in the secreted. Functionally, this toxin stabilizes ryanodine receptor 1 (RyR1) opening in a long-lasting subconductance state (48%-60% of the full conductance state). Furthermore, it triggers calcium release from sarcoplasmic vesicles (6.6 nM are enough to induce a sharp release, and 60% of the total calcium is released after toxin (100 nM) addition) probably by acting as a cell-penetrating peptide (CPP). In addition, it has been shown to dose-dependently stimulate ryanodine binding to RyR1 (EC(50)=12.5-26.4 nM). It also augments the bell-shaped calcium-[3H]ryanodine binding curve that is maximal at about 10 uM calcium concentration. It binds a different site as ryanodine. It acts synergistically with caffeine. In vivo, intracerebroventricular injection into mice causes death. This is Maurocalcin from Scorpio palmatus (Israeli golden scorpion).